The sequence spans 208 residues: Probable GTP-binding protein EngB (208 aa).

Residues G22 to A195 enclose the EngB-type G domain. GTP is bound by residues G30–S37, G57–T61, D75–G78, T142–D145, and I174–S176. Mg(2+) contacts are provided by S37 and T59.

Belongs to the TRAFAC class TrmE-Era-EngA-EngB-Septin-like GTPase superfamily. EngB GTPase family. Mg(2+) is required as a cofactor.

In terms of biological role, necessary for normal cell division and for the maintenance of normal septation. This is Probable GTP-binding protein EngB from Alkaliphilus oremlandii (strain OhILAs) (Clostridium oremlandii (strain OhILAs)).